We begin with the raw amino-acid sequence, 201 residues long: MEWVWALVVLAALGSAGAERDCRVSSFRVKENFDKARFSGTWYAMAKKDPEGLFLQDNIVAEFSVDEYGQMSATAKGRVRLLNNWDVCADMVGTFTDTEDPAKFKMKYWGVASFLQKGNDDHWIIDTDYDTYAVQYSCRLLNLDGTCADSYSFVFARDPNGFPPEVQRIVRRRQEELCLARQYRLISHNGYCDGKSDRNLL.

Residues 1 to 18 (MEWVWALVVLAALGSAGA) form the signal peptide. Disulfide bonds link Cys22–Cys178, Cys88–Cys192, and Cys138–Cys147. Position 116 (Gln116) interacts with substrate. Arg139 carries the post-translational modification Omega-N-methylarginine.

This sequence belongs to the calycin superfamily. Lipocalin family. Interacts with TTR. Interaction with TTR prevents its loss by filtration through the kidney glomeruli. Interacts with STRA6.

Its subcellular location is the secreted. Its function is as follows. Retinol-binding protein that mediates retinol transport in blood plasma. Delivers retinol from the liver stores to the peripheral tissues. Transfers the bound all-trans retinol to STRA6, that then facilitates retinol transport across the cell membrane. The chain is Retinol-binding protein 4 (RBP4) from Equus caballus (Horse).